A 214-amino-acid chain; its full sequence is Uridine kinase (214 aa).

Position 15–22 (15–22) interacts with ATP; that stretch reads GASASGKS.

Belongs to the uridine kinase family.

The protein localises to the cytoplasm. It catalyses the reaction uridine + ATP = UMP + ADP + H(+). The enzyme catalyses cytidine + ATP = CMP + ADP + H(+). The protein operates within pyrimidine metabolism; CTP biosynthesis via salvage pathway; CTP from cytidine: step 1/3. It functions in the pathway pyrimidine metabolism; UMP biosynthesis via salvage pathway; UMP from uridine: step 1/1. The sequence is that of Uridine kinase from Tolumonas auensis (strain DSM 9187 / NBRC 110442 / TA 4).